The following is a 245-amino-acid chain: Enolase-phosphatase E1 (245 aa).

It belongs to the HAD-like hydrolase superfamily. MasA/MtnC family. Monomer. The cofactor is Mg(2+).

The catalysed reaction is 5-methylsulfanyl-2,3-dioxopentyl phosphate + H2O = 1,2-dihydroxy-5-(methylsulfanyl)pent-1-en-3-one + phosphate. The protein operates within amino-acid biosynthesis; L-methionine biosynthesis via salvage pathway; L-methionine from S-methyl-5-thio-alpha-D-ribose 1-phosphate: step 3/6. Its pathway is amino-acid biosynthesis; L-methionine biosynthesis via salvage pathway; L-methionine from S-methyl-5-thio-alpha-D-ribose 1-phosphate: step 4/6. Functionally, bifunctional enzyme that catalyzes the enolization of 2,3-diketo-5-methylthiopentyl-1-phosphate (DK-MTP-1-P) into the intermediate 2-hydroxy-3-keto-5-methylthiopentenyl-1-phosphate (HK-MTPenyl-1-P), which is then dephosphorylated to form the acireductone 1,2-dihydroxy-3-keto-5-methylthiopentene (DHK-MTPene). The sequence is that of Enolase-phosphatase E1 from Prochlorococcus marinus (strain MIT 9313).